The primary structure comprises 369 residues: MRKLTQFCLGLMLLPIAAVAQNQPTMKDVLGKYFLVGTALNSHQIWTHDPKIVHAITDNFNSVVAENCMKGEIIHPEEDYYDWHDADQLVKFAEQHKMTVHGHCLVWHSQAPKWMFTDKEGKEVTREVLIDRMYHHITNVVKRYKGKIKGWDVVNEAILDNGEYRQSPYYKIIGPDFIKLAFIFAHQADPDAELYYNDYSMSIPAKRNAVVKLVKELKAAGCRIDAVGMQSHNGFNYPNLEDYENSIKAFIAAGVDVQFTELDVNMLPNPKSFGGAEISQNYKYNKELNPYVNGLTKAAQKTFDQQYLSFFKIYRKYVDHIKRVTVWGVDDGSSWLNGWPVPGRTNYGLLIDRNYKVKPVVKEIIKLYE.

An N-terminal signal peptide occupies residues 1–20 (MRKLTQFCLGLMLLPIAAVA). The GH10 domain occupies 21–367 (QNQPTMKDVL…KPVVKEIIKL (347 aa)). The active-site Proton donor is Glu-156. Glu-261 functions as the Nucleophile in the catalytic mechanism.

The protein belongs to the glycosyl hydrolase 10 (cellulase F) family.

It carries out the reaction Endohydrolysis of (1-&gt;4)-beta-D-xylosidic linkages in xylans.. It functions in the pathway glycan degradation; xylan degradation. This chain is Endo-1,4-beta-xylanase A (xynA), found in Xylanibacter ruminicola (Prevotella ruminicola).